A 498-amino-acid chain; its full sequence is Pyridine nucleotide-disulfide oxidoreductase domain-containing protein 1 (498 aa).

M1 is subject to N-acetylmethionine.

The protein belongs to the class-I pyridine nucleotide-disulfide oxidoreductase family. PYROXD1 subfamily. Requires FAD as cofactor.

Its subcellular location is the nucleus. The protein resides in the cytoplasm. It is found in the myofibril. The protein localises to the sarcomere. Its function is as follows. Probable FAD-dependent oxidoreductase; involved in the cellular oxidative stress response. Required for normal sarcomere structure and muscle fiber integrity. This chain is Pyridine nucleotide-disulfide oxidoreductase domain-containing protein 1 (Pyroxd1), found in Rattus norvegicus (Rat).